A 199-amino-acid chain; its full sequence is MGSQSSKAPRGDVTAEEAAGASPAKANGQENGHVKSNGDLTPKGEGESPPVNGADEAAGATGDAIEPAPPSQEAEAKGEVAPKETPKKKKKFSFKKPFKLSGLSFKRNRKEGGGDSSASSPTEEEQEQGEISACSDEGTAQEGKAAATPESQEPQAKGAEASAVSKGGDAEEEAGPQAAEPSTPSGPESGPASASAENE.

The interval 1–199 (MGSQSSKAPR…GPASASAENE (199 aa)) is disordered. G2 carries N-myristoyl glycine lipidation. A Phosphothreonine modification is found at T14. Residues 16–26 (EEAAGASPAKA) are compositionally biased toward low complexity. Phosphoserine is present on residues S22, S36, and S48. The span at 53 to 64 (GADEAAGATGDA) shows a compositional bias: low complexity. S71 carries the post-translational modification Phosphoserine. A compositionally biased stretch (basic and acidic residues) spans 74–85 (AEAKGEVAPKET). T85 is modified (phosphothreonine). Basic residues predominate over residues 86 to 98 (PKKKKKFSFKKPF). An effector domain involved in lipid-binding and calmodulin-binding region spans residues 87-110 (KKKKKFSFKKPFKLSGLSFKRNRK). Phosphoserine; by PKC occurs at positions 93, 101, and 104. Position 119 is a phosphoserine (S119). Phosphoserine; by MAPK8 is present on S120. Residues S132 and S135 each carry the phosphoserine modification. T148 is subject to Phosphothreonine; by MAPK8. Residues S151, S162, and S165 each carry the phosphoserine modification. The segment covering 175–199 (GPQAAEPSTPSGPESGPASASAENE) has biased composition (low complexity). T183 bears the Phosphothreonine; by MAPK8 mark.

It belongs to the MARCKS family. In terms of assembly, binds to filamentous actin (F-actin), but not to monomeric G-actin, independently of its phosphorylation status. Interacts with calmodulin. Phosphorylated. Phosphorylation at Ser-120 and Thr-183 is non-redundantly catalyzed by MAPK8 in vivo. Phosphorylation at Thr-148 is preferentially catalyzed by MAPK8 in vivo, but this modification can also be catalyzed by other kinases in the absence of MAPK8. May be phosphorylated by protein kinase C, which disrupts the interaction with calmodulin.

It is found in the cytoplasm. The protein localises to the cytoskeleton. The protein resides in the cell membrane. Functionally, controls cell movement by regulating actin cytoskeleton homeostasis and filopodium and lamellipodium formation. When unphosphorylated, induces cell migration. When phosphorylated by MAPK8, induces actin bundles formation and stabilization, thereby reducing actin plasticity, hence restricting cell movement, including neuronal migration. May be involved in coupling the protein kinase C and calmodulin signal transduction systems. In Rattus norvegicus (Rat), this protein is MARCKS-related protein (Marcksl1).